The primary structure comprises 548 residues: Phenylalanine--tRNA ligase beta subunit (548 aa).

The region spanning 271–346 is the B5 domain; the sequence is LSEAAAKLDP…ISIGYEALGP (76 aa). Residues Asp324, Asp330, Glu333, and Asp334 each coordinate Mg(2+).

This sequence belongs to the phenylalanyl-tRNA synthetase beta subunit family. Type 2 subfamily. Tetramer of two alpha and two beta subunits. Mg(2+) is required as a cofactor.

The protein localises to the cytoplasm. The catalysed reaction is tRNA(Phe) + L-phenylalanine + ATP = L-phenylalanyl-tRNA(Phe) + AMP + diphosphate + H(+). The protein is Phenylalanine--tRNA ligase beta subunit of Aeropyrum pernix (strain ATCC 700893 / DSM 11879 / JCM 9820 / NBRC 100138 / K1).